A 352-amino-acid chain; its full sequence is Small ribosomal subunit biogenesis GTPase RsgA (352 aa).

The CP-type G domain maps to 109–277 (DTVLKRPDMY…LIDSPGIREF (169 aa)). Residues 165–168 (NKAD) and 219–227 (GQSGVGKSS) contribute to the GTP site. Residues cysteine 301, cysteine 306, histidine 308, and cysteine 314 each contribute to the Zn(2+) site.

This sequence belongs to the TRAFAC class YlqF/YawG GTPase family. RsgA subfamily. In terms of assembly, monomer. Associates with 30S ribosomal subunit, binds 16S rRNA. It depends on Zn(2+) as a cofactor.

It localises to the cytoplasm. Functionally, one of several proteins that assist in the late maturation steps of the functional core of the 30S ribosomal subunit. Helps release RbfA from mature subunits. May play a role in the assembly of ribosomal proteins into the subunit. Circularly permuted GTPase that catalyzes slow GTP hydrolysis, GTPase activity is stimulated by the 30S ribosomal subunit. The chain is Small ribosomal subunit biogenesis GTPase RsgA from Alcanivorax borkumensis (strain ATCC 700651 / DSM 11573 / NCIMB 13689 / SK2).